Consider the following 126-residue polypeptide: MHELSYATSVLNAILDAVKQQEELGRKVIKVNDINLEIGDLTLISLDQLQFVFEVISEDTICKGAELKAEMVKPKIFCNDCEFEGNLDTKDELEVVCPKCESRNIKLKGGKEFNIVNATIEFDDEE.

Position 2 (H2) interacts with Ni(2+). Zn(2+) contacts are provided by C78, C81, C97, and C100.

This sequence belongs to the HypA/HybF family.

Its function is as follows. Involved in the maturation of [NiFe] hydrogenases. Required for nickel insertion into the metal center of the hydrogenase. The chain is Hydrogenase maturation factor HypA from Methanococcus maripaludis (strain DSM 14266 / JCM 13030 / NBRC 101832 / S2 / LL).